Here is a 400-residue protein sequence, read N- to C-terminus: Phosphoglycerate kinase (400 aa).

Substrate is bound by residues 21 to 23 (DLN), Arg-36, 59 to 62 (HLGR), Arg-114, and Arg-147. Residues Lys-202, Glu-329, and 355–358 (GGDT) each bind ATP.

The protein belongs to the phosphoglycerate kinase family. In terms of assembly, monomer.

The protein localises to the cytoplasm. The enzyme catalyses (2R)-3-phosphoglycerate + ATP = (2R)-3-phospho-glyceroyl phosphate + ADP. It participates in carbohydrate degradation; glycolysis; pyruvate from D-glyceraldehyde 3-phosphate: step 2/5. The polypeptide is Phosphoglycerate kinase (Psychrobacter cryohalolentis (strain ATCC BAA-1226 / DSM 17306 / VKM B-2378 / K5)).